Reading from the N-terminus, the 960-residue chain is Angiomotin-like protein 1 (960 aa).

A disordered region spans residues 196–248 (SQFFRGQQPPPPPPQQQPGAVGHSYYMAGGASQKARTEGRPTVSRANSGQAHK). A phosphoserine mark is found at serine 243, serine 271, and serine 297. Residues 261 to 281 (RSLSERIMQLSLERNGAKQHL) are a coiled coil. 3 disordered regions span residues 277-317 (AKQH…EYPF), 381-407 (LPFP…LHSV), and 413-432 (PPMA…SQQL). A compositionally biased stretch (low complexity) spans 388–401 (QQHSPVSSQNSSVS). 2 coiled-coil regions span residues 440-641 (VERA…WLER) and 667-697 (ALME…VEES). Residue serine 722 is modified to Phosphoserine. The stretch at 731–761 (SLEAHIWQEEEEVVQATRRCQDMEYTIKNLH) forms a coiled coil. The tract at residues 775–826 (QQRSRKDAGKTDSSSLRPARSVPSIAAATGTHSRQTSLTSSQLAEERKEEKT) is disordered. Phosphoserine is present on residues serine 795, serine 807, and serine 830. A compositionally biased stretch (polar residues) spans 804 to 817 (GTHSRQTSLTSSQL). The tract at residues 842–952 (NDHASTPLLP…NLLHKPEFPD (111 aa)) is disordered. Residues 845 to 870 (ASTPLLPTPSAATLSPPTPGTSASSA) are compositionally biased toward low complexity. Positions 898 to 911 (PTRSRLSGTPSNSP) are enriched in polar residues. Position 904 is a phosphoserine (serine 904). Phosphothreonine is present on threonine 906. Phosphoserine is present on serine 910. Residues 957–960 (EVLI) carry the PDZ-binding motif.

Belongs to the angiomotin family. Polyubiquitinated by NEDD4, leading to proteasomal degradation.

The protein localises to the cell junction. The protein resides in the tight junction. Inhibits the Wnt/beta-catenin signaling pathway, probably by recruiting CTNNB1 to recycling endosomes and hence preventing its translocation to the nucleus. In Bos taurus (Bovine), this protein is Angiomotin-like protein 1 (AMOTL1).